A 127-amino-acid chain; its full sequence is MPTIQQLIRTEREKARQKTKSPALKQCPQRRGVCTRVYTTTPKKPNSALRKVARVRLTSGFEVTAYIPGIGHNLQEHSVVMIRGGRVKDLPGVRYHIIRGTLDTAGVKDRKQGRSKYGTKRPKEAKK.

The segment at 8–28 (IRTEREKARQKTKSPALKQCP) is disordered. Asp89 carries the 3-methylthioaspartic acid modification. The tract at residues 102–127 (LDTAGVKDRKQGRSKYGTKRPKEAKK) is disordered. The segment covering 113-127 (GRSKYGTKRPKEAKK) has biased composition (basic residues).

It belongs to the universal ribosomal protein uS12 family. In terms of assembly, part of the 30S ribosomal subunit. Contacts proteins S8 and S17. May interact with IF1 in the 30S initiation complex.

In terms of biological role, with S4 and S5 plays an important role in translational accuracy. Interacts with and stabilizes bases of the 16S rRNA that are involved in tRNA selection in the A site and with the mRNA backbone. Located at the interface of the 30S and 50S subunits, it traverses the body of the 30S subunit contacting proteins on the other side and probably holding the rRNA structure together. The combined cluster of proteins S8, S12 and S17 appears to hold together the shoulder and platform of the 30S subunit. The chain is Small ribosomal subunit protein uS12 from Nostoc sp. (strain PCC 7120 / SAG 25.82 / UTEX 2576).